We begin with the raw amino-acid sequence, 289 residues long: Pantoate kinase (289 aa).

It belongs to the GHMP kinase family. PoK subfamily.

The enzyme catalyses (R)-pantoate + ATP = (R)-4-phosphopantoate + ADP + H(+). It participates in cofactor biosynthesis; coenzyme A biosynthesis. Functionally, phosphorylates (R)-pantoate to form (R)-4-phosphopantoate in the CoA biosynthesis pathway. ATP is the best phosphate donor. Can be replaced with UTP, with lower efficiency. The protein is Pantoate kinase of Methanospirillum hungatei JF-1 (strain ATCC 27890 / DSM 864 / NBRC 100397 / JF-1).